The following is a 105-amino-acid chain: Translation initiation factor 1A (105 aa).

The S1-like domain maps to 12–87 (TRVRTPREEN…QKCDIIWRYT (76 aa)).

Belongs to the eIF-1A family.

In terms of biological role, seems to be required for maximal rate of protein biosynthesis. Enhances ribosome dissociation into subunits and stabilizes the binding of the initiator Met-tRNA(I) to 40 S ribosomal subunits. This is Translation initiation factor 1A (eIF1A) from Methanococcus aeolicus (strain ATCC BAA-1280 / DSM 17508 / OCM 812 / Nankai-3).